A 179-amino-acid chain; its full sequence is 6,7-dimethyl-8-ribityllumazine synthase (179 aa).

5-amino-6-(D-ribitylamino)uracil is bound by residues tryptophan 13, alanine 45–glutamate 47, and valine 68–isoleucine 70. Aspartate 73–threonine 74 lines the (2S)-2-hydroxy-3-oxobutyl phosphate pocket. The Proton donor role is filled by histidine 76. Phenylalanine 101 is a binding site for 5-amino-6-(D-ribitylamino)uracil. Arginine 115 contributes to the (2S)-2-hydroxy-3-oxobutyl phosphate binding site. Residues alanine 157–lysine 179 form a disordered region.

This sequence belongs to the DMRL synthase family.

The catalysed reaction is (2S)-2-hydroxy-3-oxobutyl phosphate + 5-amino-6-(D-ribitylamino)uracil = 6,7-dimethyl-8-(1-D-ribityl)lumazine + phosphate + 2 H2O + H(+). The protein operates within cofactor biosynthesis; riboflavin biosynthesis; riboflavin from 2-hydroxy-3-oxobutyl phosphate and 5-amino-6-(D-ribitylamino)uracil: step 1/2. Its function is as follows. Catalyzes the formation of 6,7-dimethyl-8-ribityllumazine by condensation of 5-amino-6-(D-ribitylamino)uracil with 3,4-dihydroxy-2-butanone 4-phosphate. This is the penultimate step in the biosynthesis of riboflavin. The protein is 6,7-dimethyl-8-ribityllumazine synthase of Bdellovibrio bacteriovorus (strain ATCC 15356 / DSM 50701 / NCIMB 9529 / HD100).